Reading from the N-terminus, the 456-residue chain is Outer membrane efflux protein BepC (456 aa).

The signal sequence occupies residues 1–28; sequence MRYTVFKACKELVAAAVLLSGTVLTGQA. The stretch at 312 to 341 forms a coiled coil; that stretch reads RTSAQIRQSKEQLGQARIEVDVVQDKVRQA.

This sequence belongs to the outer membrane factor (OMF) (TC 1.B.17) family. Probably part of a tripartite efflux pump, which is composed of an outer membrane efflux protein, an inner membrane protein and a protein that expands the periplasmic space. Could form a tripartite pump with BepD and BepE or with BepF and BepG.

The protein resides in the cell outer membrane. Functionally, involved in the efflux of toxic and relatively hydrophobic compounds. Influences survival inside the host. This is Outer membrane efflux protein BepC (bepC) from Brucella suis biovar 1 (strain 1330).